The chain runs to 151 residues: Superoxide dismutase [Cu-Zn] A (151 aa).

The S-palmitoyl cysteine moiety is linked to residue Cys-6. His-45, His-47, and His-62 together coordinate Cu cation. A disulfide bridge connects residues Cys-56 and Cys-144. The Zn(2+) site is built by His-62, His-70, His-79, and Asp-82. His-118 contributes to the Cu cation binding site.

The protein belongs to the Cu-Zn superoxide dismutase family. As to quaternary structure, homodimer, and heterodimer of Superoxide dismutase [Cu-Zn] A and B. Cu cation serves as cofactor. Requires Zn(2+) as cofactor.

The protein resides in the cytoplasm. Its subcellular location is the nucleus. It carries out the reaction 2 superoxide + 2 H(+) = H2O2 + O2. Destroys radicals which are normally produced within the cells and which are toxic to biological systems. The polypeptide is Superoxide dismutase [Cu-Zn] A (sod1-a) (Xenopus laevis (African clawed frog)).